A 349-amino-acid chain; its full sequence is UDP-3-O-acylglucosamine N-acyltransferase (349 aa).

The Proton acceptor role is filled by histidine 248.

The protein belongs to the transferase hexapeptide repeat family. LpxD subfamily. In terms of assembly, homotrimer.

The enzyme catalyses a UDP-3-O-[(3R)-3-hydroxyacyl]-alpha-D-glucosamine + a (3R)-hydroxyacyl-[ACP] = a UDP-2-N,3-O-bis[(3R)-3-hydroxyacyl]-alpha-D-glucosamine + holo-[ACP] + H(+). It participates in bacterial outer membrane biogenesis; LPS lipid A biosynthesis. Its function is as follows. Catalyzes the N-acylation of UDP-3-O-acylglucosamine using 3-hydroxyacyl-ACP as the acyl donor. Is involved in the biosynthesis of lipid A, a phosphorylated glycolipid that anchors the lipopolysaccharide to the outer membrane of the cell. This is UDP-3-O-acylglucosamine N-acyltransferase from Colwellia psychrerythraea (strain 34H / ATCC BAA-681) (Vibrio psychroerythus).